Reading from the N-terminus, the 81-residue chain is Antitoxin VapB28 (81 aa).

Antitoxin component of a type II toxin-antitoxin (TA) system. This is Antitoxin VapB28 (vapB28) from Mycobacterium tuberculosis (strain CDC 1551 / Oshkosh).